Consider the following 430-residue polypeptide: UDP-N-acetylglucosamine 1-carboxyvinyltransferase 1 (430 aa).

A phosphoenolpyruvate-binding site is contributed by 22-23 (KN). Arginine 102 is a binding site for UDP-N-acetyl-alpha-D-glucosamine. The Proton donor role is filled by cysteine 126. Cysteine 126 carries the post-translational modification 2-(S-cysteinyl)pyruvic acid O-phosphothioketal. UDP-N-acetyl-alpha-D-glucosamine contacts are provided by residues 131 to 135 (RPVDL), 172 to 175 (KVSV), aspartate 317, and isoleucine 339.

Belongs to the EPSP synthase family. MurA subfamily.

The protein resides in the cytoplasm. It carries out the reaction phosphoenolpyruvate + UDP-N-acetyl-alpha-D-glucosamine = UDP-N-acetyl-3-O-(1-carboxyvinyl)-alpha-D-glucosamine + phosphate. Its pathway is cell wall biogenesis; peptidoglycan biosynthesis. Functionally, cell wall formation. Adds enolpyruvyl to UDP-N-acetylglucosamine. The protein is UDP-N-acetylglucosamine 1-carboxyvinyltransferase 1 of Mesorhizobium japonicum (strain LMG 29417 / CECT 9101 / MAFF 303099) (Mesorhizobium loti (strain MAFF 303099)).